Consider the following 415-residue polypeptide: Hepatocyte nuclear factor 3-beta (415 aa).

Positions 150–244 (KPPYSYISLI…ENGCYLRRQK (95 aa)) form a DNA-binding region, fork-head. Over residues 251–262 (KMSMKEPGRKGG) the composition is skewed to basic and acidic residues. A disordered region spans residues 251 to 324 (KMSMKEPGRK…GQHLMSQHHS (74 aa)). Over residues 266 to 277 (SANSSSDSCNGN) the composition is skewed to low complexity. Positions 310–323 (SPVSQGQHLMSQHH) are enriched in polar residues.

The protein localises to the nucleus. Its function is as follows. Transcription activator for a number of liver genes. Interacts with the cis-acting regulatory regions of these genes. The sequence is that of Hepatocyte nuclear factor 3-beta (foxa2) from Oryzias latipes (Japanese rice fish).